Consider the following 340-residue polypeptide: Fructose-1,6-bisphosphatase class 1 (340 aa).

Glu-107, Asp-126, Leu-128, and Asp-129 together coordinate Mg(2+). Asn-215 is a substrate binding site. Residue Glu-287 coordinates Mg(2+).

The protein belongs to the FBPase class 1 family. In terms of assembly, homotetramer. Mg(2+) serves as cofactor.

The protein localises to the cytoplasm. It carries out the reaction beta-D-fructose 1,6-bisphosphate + H2O = beta-D-fructose 6-phosphate + phosphate. Its pathway is carbohydrate biosynthesis; gluconeogenesis. The sequence is that of Fructose-1,6-bisphosphatase class 1 from Brucella anthropi (strain ATCC 49188 / DSM 6882 / CCUG 24695 / JCM 21032 / LMG 3331 / NBRC 15819 / NCTC 12168 / Alc 37) (Ochrobactrum anthropi).